The sequence spans 571 residues: Urease subunit alpha (571 aa).

Residues 133–571 form the Urease domain; the sequence is GGIDTHVHFI…LPLTQRYFLF (439 aa). Ni(2+)-binding residues include H138, H140, and K221. N6-carboxylysine is present on K221. Residue H223 participates in substrate binding. Ni(2+)-binding residues include H250 and H276. H324 acts as the Proton donor in catalysis. D364 lines the Ni(2+) pocket.

This sequence belongs to the metallo-dependent hydrolases superfamily. Urease alpha subunit family. In terms of assembly, heterotrimer of UreA (gamma), UreB (beta) and UreC (alpha) subunits. Three heterotrimers associate to form the active enzyme. Ni cation is required as a cofactor. Carboxylation allows a single lysine to coordinate two nickel ions.

The protein resides in the cytoplasm. The enzyme catalyses urea + 2 H2O + H(+) = hydrogencarbonate + 2 NH4(+). Its pathway is nitrogen metabolism; urea degradation; CO(2) and NH(3) from urea (urease route): step 1/1. The chain is Urease subunit alpha from Staphylococcus saprophyticus subsp. saprophyticus (strain ATCC 15305 / DSM 20229 / NCIMB 8711 / NCTC 7292 / S-41).